We begin with the raw amino-acid sequence, 199 residues long: Probable nicotinate-nucleotide adenylyltransferase (199 aa).

It belongs to the NadD family.

It carries out the reaction nicotinate beta-D-ribonucleotide + ATP + H(+) = deamido-NAD(+) + diphosphate. It participates in cofactor biosynthesis; NAD(+) biosynthesis; deamido-NAD(+) from nicotinate D-ribonucleotide: step 1/1. Catalyzes the reversible adenylation of nicotinate mononucleotide (NaMN) to nicotinic acid adenine dinucleotide (NaAD). The polypeptide is Probable nicotinate-nucleotide adenylyltransferase (Roseiflexus castenholzii (strain DSM 13941 / HLO8)).